A 343-amino-acid chain; its full sequence is D-alanine--D-alanine ligase (343 aa).

The ATP-grasp domain occupies 132–337; the sequence is KNLFSYHKIP…YPDLIDKLIE (206 aa). Residue 165–220 coordinates ATP; it reads DRFLGWPCFVKPANMGSSIGVSKVHSPGEVKKALEKGFYYDRKLIFEEFVEGREIE. Mg(2+) contacts are provided by D291, E304, and N306.

It belongs to the D-alanine--D-alanine ligase family. Requires Mg(2+) as cofactor. Mn(2+) serves as cofactor.

It is found in the cytoplasm. The catalysed reaction is 2 D-alanine + ATP = D-alanyl-D-alanine + ADP + phosphate + H(+). Its pathway is cell wall biogenesis; peptidoglycan biosynthesis. In terms of biological role, cell wall formation. This chain is D-alanine--D-alanine ligase, found in Halothermothrix orenii (strain H 168 / OCM 544 / DSM 9562).